Consider the following 152-residue polypeptide: UPF0719 transmembrane protein MT2674.1 (152 aa).

Helical transmembrane passes span 21–41 (VATV…FLMV), 62–82 (VVLA…AIYA), 92–112 (IGVA…LVIL), and 131–151 (PAVF…AAAL).

Belongs to the UPF0719 family.

The protein localises to the cell membrane. This Mycobacterium tuberculosis (strain CDC 1551 / Oshkosh) protein is UPF0719 transmembrane protein MT2674.1.